The sequence spans 426 residues: Tyrosine--tRNA ligase (426 aa).

Residue Tyr36 coordinates L-tyrosine. The short motif at 41–50 is the 'HIGH' region element; that stretch reads PTAPSLHVGH. Tyr174 and Gln178 together coordinate L-tyrosine. The 'KMSKS' region signature appears at 234–238; sequence KLGKS. Lys237 serves as a coordination point for ATP. One can recognise an S4 RNA-binding domain in the interval 359–416; the sequence is DGIVDLLVASGLSPSRGAARRTIDEGGVLVNNIRIQSEEWTPRTSDFLHGRWLVLRRG.

This sequence belongs to the class-I aminoacyl-tRNA synthetase family. TyrS type 1 subfamily. Homodimer.

The protein localises to the cytoplasm. It carries out the reaction tRNA(Tyr) + L-tyrosine + ATP = L-tyrosyl-tRNA(Tyr) + AMP + diphosphate + H(+). Catalyzes the attachment of tyrosine to tRNA(Tyr) in a two-step reaction: tyrosine is first activated by ATP to form Tyr-AMP and then transferred to the acceptor end of tRNA(Tyr). This Mycobacterium leprae (strain TN) protein is Tyrosine--tRNA ligase.